A 187-amino-acid polypeptide reads, in one-letter code: Elongation factor P (187 aa).

It belongs to the elongation factor P family.

It is found in the cytoplasm. It participates in protein biosynthesis; polypeptide chain elongation. Functionally, involved in peptide bond synthesis. Stimulates efficient translation and peptide-bond synthesis on native or reconstituted 70S ribosomes in vitro. Probably functions indirectly by altering the affinity of the ribosome for aminoacyl-tRNA, thus increasing their reactivity as acceptors for peptidyl transferase. This chain is Elongation factor P, found in Synechococcus sp. (strain WH7803).